A 392-amino-acid chain; its full sequence is Meiotically up-regulated gene 11 protein (392 aa).

The protein localises to the cytoplasm. It localises to the nucleus. Its function is as follows. Has a role in meiosis. This is Meiotically up-regulated gene 11 protein (mug11) from Schizosaccharomyces pombe (strain 972 / ATCC 24843) (Fission yeast).